The following is a 214-amino-acid chain: Cdc42 effector protein 2 (214 aa).

At Ser2 the chain carries N-acetylserine. The 15-residue stretch at 30 to 44 (ISPPLGDFRHTIHIG) folds into the CRIB domain. A phosphoserine mark is found at Ser31, Ser101, Ser137, Ser141, and Ser145. The segment at 118-151 (ALTLPTTQAPPKPPRLHLESPQPSPKSSPQEAGN) is disordered.

This sequence belongs to the BORG/CEP family. As to quaternary structure, interacts with CDC42 and RHOQ, in a GTP-dependent manner, and with SEPT7.

The protein localises to the endomembrane system. It is found in the cytoplasm. The protein resides in the cytoskeleton. Its function is as follows. Probably involved in the organization of the actin cytoskeleton. May act downstream of CDC42 to induce actin filament assembly leading to cell shape changes. Induces pseudopodia formation in fibroblasts in a CDC42-dependent manner. The chain is Cdc42 effector protein 2 (Cdc42ep2) from Rattus norvegicus (Rat).